A 77-amino-acid chain; its full sequence is U18-lycotoxin-Ls1a (77 aa).

The N-terminal stretch at 1–22 is a signal peptide; the sequence is MSPKMQALLLLLGLITLLVVHA. Positions 23–34 are excised as a propeptide; it reads EEELSENTESER. Disulfide bonds link Cys36–Cys51, Cys43–Cys56, Cys50–Cys67, and Cys58–Cys65.

This sequence belongs to the neurotoxin 02 (plectoxin) family. As to expression, expressed by the venom gland.

The protein localises to the secreted. In Lycosa singoriensis (Wolf spider), this protein is U18-lycotoxin-Ls1a.